The sequence spans 334 residues: MATLKEKLIAPVADDETAVPNNKITVVGVGQVGMACAISILGKSLADELALVDVLEDKLKGEMMDLQHGSLFLQTPKIVADKDYSVTANSKIVVVTAGVRQQEGESRLNLVQRNVNVFKFIIPQIVKYSPDCTIIVVSNPVDILTYVTWKLSGLPKHRVIGSGCNLDSARFRYLMAEKLGIHPSSCHGWILGEHGDSSVAVWSGVNVAGVSLQELNPEMGTDNDSENWKEVHKMVVDSAYEVIKLKGYTNWAIGLSVADLIESMLKNLSRIHPVSTMVKGMYGIENEVFLSLPCILNARGLTSVINQKLKDDEVAQLRKSADTLWDIQKDLKDL.

The residue at position 2 (A2) is an N-acetylalanine. K7 is modified (N6-acetyllysine). NAD(+)-binding positions include 30-58 (GQVG…LEDK) and R100. S44 carries the post-translational modification Phosphoserine. Position 58 is an N6-acetyllysine (K58). R107 lines the substrate pocket. The residue at position 119 (K119) is an N6-acetyllysine. N139 provides a ligand contact to NAD(+). Residues N139 and R170 each contribute to the substrate site. H194 functions as the Proton acceptor in the catalytic mechanism. Y240 bears the Phosphotyrosine mark. Substrate is bound at residue T249. K329 is subject to N6-acetyllysine.

The protein belongs to the LDH/MDH superfamily. LDH family. As to quaternary structure, homotetramer. Interacts with PTEN upstream reading frame protein MP31; the interaction leads to inhibition of mitochondrial lactate dehydrogenase activity, preventing conversion of lactate to pyruvate in mitochondria.

Its subcellular location is the cytoplasm. The protein localises to the mitochondrion inner membrane. It catalyses the reaction (S)-lactate + NAD(+) = pyruvate + NADH + H(+). The protein operates within fermentation; pyruvate fermentation to lactate; (S)-lactate from pyruvate: step 1/1. Functionally, interconverts simultaneously and stereospecifically pyruvate and lactate with concomitant interconversion of NADH and NAD(+). This Rattus norvegicus (Rat) protein is L-lactate dehydrogenase B chain (Ldhb).